The chain runs to 294 residues: Urease accessory protein UreD (294 aa).

The tract at residues 1 to 22 (MSVEKPVAAGRQNSKATGRHKG) is disordered.

This sequence belongs to the UreD family. UreD, UreF and UreG form a complex that acts as a GTP-hydrolysis-dependent molecular chaperone, activating the urease apoprotein by helping to assemble the nickel containing metallocenter of UreC. The UreE protein probably delivers the nickel.

The protein resides in the cytoplasm. Its function is as follows. Required for maturation of urease via the functional incorporation of the urease nickel metallocenter. The polypeptide is Urease accessory protein UreD (Alcanivorax borkumensis (strain ATCC 700651 / DSM 11573 / NCIMB 13689 / SK2)).